The chain runs to 270 residues: tRNA pseudouridine synthase A (270 aa).

The Nucleophile role is filled by aspartate 55. Residue tyrosine 110 coordinates substrate.

Belongs to the tRNA pseudouridine synthase TruA family.

It catalyses the reaction uridine(38/39/40) in tRNA = pseudouridine(38/39/40) in tRNA. Its function is as follows. Formation of pseudouridine at positions 38, 39 and 40 in the anticodon stem and loop of transfer RNAs. The polypeptide is tRNA pseudouridine synthase A (Methanoculleus marisnigri (strain ATCC 35101 / DSM 1498 / JR1)).